A 258-amino-acid chain; its full sequence is GCN5-related N-acetyltransferase 2, chloroplastic (258 aa).

Residues 1–58 constitute a chloroplast transit peptide; it reads MLLIPISSSSSSSISPPPNSYPSNHHSLFFSNLTFPIQHGSRKLKTLRLRANFWESIR. The segment at 107–194 is interaction with begomoviruses NSP protein; sequence IIFSSGGEID…DHAFNATIWD (88 aa). One can recognise an N-acetyltransferase domain in the interval 107-258; that stretch reads IIFSSGGEID…GIKGMFWYPK (152 aa). Acetyl-CoA-binding positions include 195-197, 203-208, 231-233, and tyrosine 238; these read VLV, GQGLGK, and DSQ. Catalysis depends on tyrosine 238, which acts as the Proton donor.

Belongs to the acetyltransferase family. GNAT subfamily. In terms of assembly, oligomer. Interacts with begomoviruses NSP but not with CP. This interaction may allow NSP to recruit NSI monomers to acetylate viral genome-bound CP and thus regulate nuclear export of viral genome by NSP. Post-translationally, S-sulfhydrated and activated by hydrogen sulfide H(2)S to promote melatonin accumulation and subsequent melatonin-dependent stomotal closure to combat osmotic stress. In terms of processing, autoacetylated. In terms of tissue distribution, highly expressed in cauline leaves and seeds, at lower levels in stems, siliques, inflorescences and rosettes leaves and at very low levels in roots. Expressed in the xylem parenchyma and phloem of the leaves and root, and in guard cells of young leaves.

The protein resides in the plastid. It is found in the chloroplast. It catalyses the reaction 5-methoxytryptamine + acetyl-CoA = melatonin + CoA + H(+). It carries out the reaction L-lysyl-[histone] + acetyl-CoA = N(6)-acetyl-L-lysyl-[histone] + CoA + H(+). The catalysed reaction is L-lysyl-[protein] + acetyl-CoA = N(6)-acetyl-L-lysyl-[protein] + CoA + H(+). The enzyme catalyses serotonin + acetyl-CoA = N-acetylserotonin + CoA + H(+). It catalyses the reaction N-terminal L-alanyl-[protein] + acetyl-CoA = N-terminal N(alpha)-acetyl-L-alanyl-[protein] + CoA + H(+). It carries out the reaction N-terminal L-seryl-[protein] + acetyl-CoA = N-terminal N(alpha)-acetyl-L-seryl-[protein] + CoA + H(+). The catalysed reaction is N-terminal L-valyl-[protein] + acetyl-CoA = N-terminal N(alpha)-acetyl-L-valyl-[protein] + CoA + H(+). The enzyme catalyses N-terminal glycyl-[protein] + acetyl-CoA = N-terminal N(alpha)-acetylglycyl-[protein] + CoA + H(+). It catalyses the reaction an N-terminal L-alpha-aminoacyl-[protein] + acetyl-CoA = N-terminal N(alpha)-acetyl-L-alpha-aminoacyl-[protein] + CoA + H(+). It carries out the reaction N-terminal L-threonyl-[protein] + acetyl-CoA = N-terminal N(alpha)-acetyl-L-threonyl-[protein] + CoA + H(+). The catalysed reaction is N-terminal L-methionyl-[protein] + acetyl-CoA = N-terminal N(alpha)-acetyl-L-methionyl-[protein] + CoA + H(+). The enzyme catalyses N-terminal L-leucyl-[protein] + acetyl-CoA = N-terminal N(alpha)-acetyl-L-leucyl-[protein] + CoA + H(+). Inhibited by the viral nuclear shuttle protein (NSP) that binds to the region required for oligomerization. Functionally, protein acetyltransferase with dual specificity triggering both N-alpha-acetylation (NTA), with a preference for alanine, serine, threonine, methionine and to a lower extent valine as substrates (can also use glycine and leucine), and epsilon-lysine acetylation (KA) of several plastid proteins. Triggers lysine acetylation in KEA1 and KEA2. Acetylates in vitro histones H2A and H3. Does not act as a transcriptional activator but required for the dynamic reorganization of thylakoid protein complexes and grana during photosynthetic state transitions. Involved in melatonin biosynthesis by catalyzing the formation of N-acetylserotonin (NAS) from serotonin and of melatonin (N-acetyl-5-methoxytryptamine) from 5-methoxytryptamine (5-MT). By triggering melatonin biosynthesis, contributes to the chloroplast protein quality control (CPQC), which plays a pivotal role in starch synthesis, and confers melatonin-associated tolerance to high light (HL) stress. Prevents the accumulation of oil and anthocyanin content in mature seeds and avoids seed germination in a melatonin-dependent manner, but promotes mucilage production in the seed coat. Contributes to melatonin-mediated anthocyanin production in cold-exposed seedlings. Implicated in melatonin-monitored circadian dynamics of stomatal aperture to minimize night water loss and promote drought tolerance, partly by triggering hydrogen sulfide H(2)S-dependent stomotal closure in response to osmotic stress. In terms of biological role, (Microbial infection) Required for begomovirus infection and systemic spread. In case of begomoviruses infection, acetylates the capsid protein (CP), but not the nuclear shuttle protein (NSP). Stimulates melatonin-triggered defense responses to the necrotrophic Botrytis cinerea. The polypeptide is GCN5-related N-acetyltransferase 2, chloroplastic (Arabidopsis thaliana (Mouse-ear cress)).